The chain runs to 282 residues: Bifunctional protein FolD (282 aa).

NADP(+) contacts are provided by residues 165-167 (GAS) and Ile-231.

The protein belongs to the tetrahydrofolate dehydrogenase/cyclohydrolase family. As to quaternary structure, homodimer.

The catalysed reaction is (6R)-5,10-methylene-5,6,7,8-tetrahydrofolate + NADP(+) = (6R)-5,10-methenyltetrahydrofolate + NADPH. It catalyses the reaction (6R)-5,10-methenyltetrahydrofolate + H2O = (6R)-10-formyltetrahydrofolate + H(+). It functions in the pathway one-carbon metabolism; tetrahydrofolate interconversion. In terms of biological role, catalyzes the oxidation of 5,10-methylenetetrahydrofolate to 5,10-methenyltetrahydrofolate and then the hydrolysis of 5,10-methenyltetrahydrofolate to 10-formyltetrahydrofolate. The sequence is that of Bifunctional protein FolD from Francisella tularensis subsp. tularensis (strain FSC 198).